The primary structure comprises 253 residues: tRNA (guanine-N(1)-)-methyltransferase (253 aa).

Residues Gly-110 and 130-135 (IGDYIL) contribute to the S-adenosyl-L-methionine site.

This sequence belongs to the RNA methyltransferase TrmD family. Homodimer.

The protein localises to the cytoplasm. The catalysed reaction is guanosine(37) in tRNA + S-adenosyl-L-methionine = N(1)-methylguanosine(37) in tRNA + S-adenosyl-L-homocysteine + H(+). Its function is as follows. Specifically methylates guanosine-37 in various tRNAs. This is tRNA (guanine-N(1)-)-methyltransferase from Carboxydothermus hydrogenoformans (strain ATCC BAA-161 / DSM 6008 / Z-2901).